A 338-amino-acid chain; its full sequence is Lipoate-protein ligase A (338 aa).

The region spanning 29–216 is the BPL/LPL catalytic domain; it reads DPNQRVLFLW…AFFAHYGARV (188 aa). Residues R71, 76–79, and K134 contribute to the ATP site; that span reads GAVF. K134 lines the (R)-lipoate pocket.

This sequence belongs to the LplA family. Monomer.

The protein localises to the cytoplasm. The catalysed reaction is L-lysyl-[lipoyl-carrier protein] + (R)-lipoate + ATP = N(6)-[(R)-lipoyl]-L-lysyl-[lipoyl-carrier protein] + AMP + diphosphate + H(+). Its pathway is protein modification; protein lipoylation via exogenous pathway; protein N(6)-(lipoyl)lysine from lipoate: step 1/2. It participates in protein modification; protein lipoylation via exogenous pathway; protein N(6)-(lipoyl)lysine from lipoate: step 2/2. In terms of biological role, catalyzes both the ATP-dependent activation of exogenously supplied lipoate to lipoyl-AMP and the transfer of the activated lipoyl onto the lipoyl domains of lipoate-dependent enzymes. The polypeptide is Lipoate-protein ligase A (Aeromonas salmonicida (strain A449)).